A 471-amino-acid polypeptide reads, in one-letter code: POU domain protein 2 (471 aa).

The segment covering 1-18 (CGKSYEEEEEEEDDELEA) has biased composition (acidic residues). Disordered regions lie at residues 1–32 (CGKS…SARQ) and 149–238 (DQQL…PKPL). A compositionally biased stretch (low complexity) spans 165 to 180 (STPLSKSPLRSPSLSP). Positions 186–196 (EPQQAQRTPPN) are enriched in polar residues. Low complexity predominate over residues 197–230 (SLAAAGLGLSSAVLTPNTPSMQQQQQQTMTSTTN). The 75-residue stretch at 257 to 331 (EETTDLEELE…LLQKWLEDAD (75 aa)) folds into the POU-specific domain. The homeobox DNA-binding region spans 362-421 (RRKKRTSIETTIRGALEQAFVLNCKPTSEEINQLSERLHMDKEVVRVWFCNRRQKEKRIN).

The protein belongs to the POU transcription factor family. Class-2 subfamily.

The protein localises to the nucleus. DNA-binding regulatory protein implicated in early development. Involved in neuronal cell fate decision. May act as an octamer-dependent activator of transcription. This chain is POU domain protein 2 (pdm2), found in Drosophila virilis (Fruit fly).